Reading from the N-terminus, the 386-residue chain is 3-ketoacyl-CoA thiolase (386 aa).

Catalysis depends on cysteine 91, which acts as the Acyl-thioester intermediate. Active-site proton acceptor residues include histidine 342 and cysteine 372.

The protein belongs to the thiolase-like superfamily. Thiolase family. As to quaternary structure, heterotetramer of two alpha chains (FadB) and two beta chains (FadA).

The protein localises to the cytoplasm. It carries out the reaction an acyl-CoA + acetyl-CoA = a 3-oxoacyl-CoA + CoA. Its pathway is lipid metabolism; fatty acid beta-oxidation. Its function is as follows. Catalyzes the final step of fatty acid oxidation in which acetyl-CoA is released and the CoA ester of a fatty acid two carbons shorter is formed. The chain is 3-ketoacyl-CoA thiolase from Colwellia psychrerythraea (strain 34H / ATCC BAA-681) (Vibrio psychroerythus).